The sequence spans 213 residues: Phosphoribosyl-dephospho-CoA transferase (213 aa).

Catalysis depends on residues aspartate 135 and aspartate 137.

It belongs to the MdcG family.

It catalyses the reaction apo-[malonate decarboxylase ACP] + 2'-(5''-triphospho-alpha-D-ribosyl)-3'-dephospho-CoA = holo-[malonate decarboxylase ACP] + diphosphate. In terms of biological role, transfers 2'-(5-triphosphoribosyl)-3'-dephosphocoenzyme-A to the apo-[acyl-carrier-protein] of the malonate decarboxylase to yield holo-[acyl-carrier-protein]. The polypeptide is Phosphoribosyl-dephospho-CoA transferase (Xanthomonas euvesicatoria pv. vesicatoria (strain 85-10) (Xanthomonas campestris pv. vesicatoria)).